Reading from the N-terminus, the 217-residue chain is D-methionine transport system permease protein MetI (217 aa).

The region spanning 13-204 is the ABC transmembrane type-1 domain; sequence VWETLMMTFV…LLVILVYLIQ (192 aa). A run of 5 helical transmembrane segments spans residues 20 to 40, 58 to 78, 81 to 101, 152 to 172, and 186 to 206; these read TFVS…LLYV, GVVN…MIPF, MIVG…VGAA, ITLI…AGGL, and ATVM…IQLS.

The protein belongs to the binding-protein-dependent transport system permease family. CysTW subfamily.

It localises to the cell inner membrane. In terms of biological role, part of the binding-protein-dependent transport system for D-methionine and the toxic methionine analog alpha-methyl-methionine. Probably responsible for the translocation of the substrate across the membrane. The protein is D-methionine transport system permease protein MetI (metI) of Yersinia pestis.